The following is a 247-amino-acid chain: 5'-nucleotidase SurE (247 aa).

Positions 8, 9, 39, and 91 each coordinate a divalent metal cation.

This sequence belongs to the SurE nucleotidase family. A divalent metal cation is required as a cofactor.

It is found in the cytoplasm. It catalyses the reaction a ribonucleoside 5'-phosphate + H2O = a ribonucleoside + phosphate. Functionally, nucleotidase that shows phosphatase activity on nucleoside 5'-monophosphates. This chain is 5'-nucleotidase SurE, found in Laribacter hongkongensis (strain HLHK9).